A 159-amino-acid polypeptide reads, in one-letter code: Phosphopantetheine adenylyltransferase (159 aa).

Threonine 10 is a substrate binding site. ATP is bound by residues 10–11 (TF) and histidine 18. Residues lysine 42, leucine 74, and arginine 88 each contribute to the substrate site. ATP is bound by residues 89–91 (GLR), glutamate 99, and 124–130 (NAFISSS).

The protein belongs to the bacterial CoaD family. Homohexamer. It depends on Mg(2+) as a cofactor.

Its subcellular location is the cytoplasm. The enzyme catalyses (R)-4'-phosphopantetheine + ATP + H(+) = 3'-dephospho-CoA + diphosphate. Its pathway is cofactor biosynthesis; coenzyme A biosynthesis; CoA from (R)-pantothenate: step 4/5. In terms of biological role, reversibly transfers an adenylyl group from ATP to 4'-phosphopantetheine, yielding dephospho-CoA (dPCoA) and pyrophosphate. The sequence is that of Phosphopantetheine adenylyltransferase from Campylobacter fetus subsp. fetus (strain 82-40).